Consider the following 231-residue polypeptide: ATP phosphoribosyltransferase (231 aa).

Belongs to the ATP phosphoribosyltransferase family. Short subfamily. In terms of assembly, heteromultimer composed of HisG and HisZ subunits.

The protein resides in the cytoplasm. It catalyses the reaction 1-(5-phospho-beta-D-ribosyl)-ATP + diphosphate = 5-phospho-alpha-D-ribose 1-diphosphate + ATP. It functions in the pathway amino-acid biosynthesis; L-histidine biosynthesis; L-histidine from 5-phospho-alpha-D-ribose 1-diphosphate: step 1/9. Its function is as follows. Catalyzes the condensation of ATP and 5-phosphoribose 1-diphosphate to form N'-(5'-phosphoribosyl)-ATP (PR-ATP). Has a crucial role in the pathway because the rate of histidine biosynthesis seems to be controlled primarily by regulation of HisG enzymatic activity. The protein is ATP phosphoribosyltransferase (hisG) of Rhizobium etli (strain CIAT 652).